Here is a 500-residue protein sequence, read N- to C-terminus: ATP synthase subunit alpha (500 aa).

G169–T176 lines the ATP pocket.

Belongs to the ATPase alpha/beta chains family. F-type ATPases have 2 components, CF(1) - the catalytic core - and CF(0) - the membrane proton channel. CF(1) has five subunits: alpha(3), beta(3), gamma(1), delta(1), epsilon(1). CF(0) has three main subunits: a(1), b(2) and c(9-12). The alpha and beta chains form an alternating ring which encloses part of the gamma chain. CF(1) is attached to CF(0) by a central stalk formed by the gamma and epsilon chains, while a peripheral stalk is formed by the delta and b chains.

Its subcellular location is the cell membrane. The catalysed reaction is ATP + H2O + 4 H(+)(in) = ADP + phosphate + 5 H(+)(out). Functionally, produces ATP from ADP in the presence of a proton gradient across the membrane. The alpha chain is a regulatory subunit. This is ATP synthase subunit alpha from Lactococcus lactis subsp. cremoris (strain MG1363).